A 427-amino-acid polypeptide reads, in one-letter code: Gamma-glutamyl phosphate reductase (427 aa).

Belongs to the gamma-glutamyl phosphate reductase family.

Its subcellular location is the cytoplasm. It carries out the reaction L-glutamate 5-semialdehyde + phosphate + NADP(+) = L-glutamyl 5-phosphate + NADPH + H(+). It functions in the pathway amino-acid biosynthesis; L-proline biosynthesis; L-glutamate 5-semialdehyde from L-glutamate: step 2/2. Catalyzes the NADPH-dependent reduction of L-glutamate 5-phosphate into L-glutamate 5-semialdehyde and phosphate. The product spontaneously undergoes cyclization to form 1-pyrroline-5-carboxylate. In Bifidobacterium adolescentis (strain ATCC 15703 / DSM 20083 / NCTC 11814 / E194a), this protein is Gamma-glutamyl phosphate reductase.